The sequence spans 225 residues: MSQNSELRQSFIRFAVEAGVLSFGEFVTKAGRTSPYFFNAGKFADGALLGQVAQFYAKTLLDSGVEFDMLFGPAYKGITLASATAVALAGLGRNVGFAYNRKEAKDHGEGGSLVGAKLQGRVVIVDDVISAGTSVRESVELIRAAGATPAAVLILMDRMERSGNAVDIGERSAVQDVQAQYGMPVVSIANLDDLLGYLDNAGDPALAGYREKAAAYRDKYGVSAI.

K29 contributes to the 5-phospho-alpha-D-ribose 1-diphosphate binding site. Position 37–38 (37–38 (FF)) interacts with orotate. 5-phospho-alpha-D-ribose 1-diphosphate-binding positions include 75 to 76 (YK), R101, K102, K105, H107, and 126 to 134 (DDVISAGTS). Orotate is bound by residues S130 and R158.

This sequence belongs to the purine/pyrimidine phosphoribosyltransferase family. PyrE subfamily. In terms of assembly, homodimer. Mg(2+) is required as a cofactor.

It catalyses the reaction orotidine 5'-phosphate + diphosphate = orotate + 5-phospho-alpha-D-ribose 1-diphosphate. It functions in the pathway pyrimidine metabolism; UMP biosynthesis via de novo pathway; UMP from orotate: step 1/2. Its function is as follows. Catalyzes the transfer of a ribosyl phosphate group from 5-phosphoribose 1-diphosphate to orotate, leading to the formation of orotidine monophosphate (OMP). The polypeptide is Orotate phosphoribosyltransferase (Ralstonia pickettii (strain 12J)).